The primary structure comprises 84 residues: RNA-binding protein Hfq (84 aa).

One can recognise a Sm domain in the interval 9 to 68 (DPYLNTLRKERVPVSIYLVNGIKLQGQIESFDQFVILLKNTVSQMVYKHAISTVVPGRPV).

It belongs to the Hfq family. Homohexamer.

RNA chaperone that binds small regulatory RNA (sRNAs) and mRNAs to facilitate mRNA translational regulation in response to envelope stress, environmental stress and changes in metabolite concentrations. Also binds with high specificity to tRNAs. The sequence is that of RNA-binding protein Hfq from Stutzerimonas stutzeri (strain A1501) (Pseudomonas stutzeri).